The following is a 228-amino-acid chain: Claudin-10 (228 aa).

A helical transmembrane segment spans residues 1–21; sequence MASTASEIIAFMVSISGWVLV. The Extracellular segment spans residues 22 to 80; the sequence is SSTLPTDYWKVSTIDGTVITTATYWANLWKACVTDSTGVSNCKDFPSMLALDGYIQACR. Residues 81 to 101 traverse the membrane as a helical segment; sequence GLMIAAVSLGFFGSIFALFGM. Residues 102-115 lie on the Cytoplasmic side of the membrane; that stretch reads KCTKVGGSDKAKAK. Residues 116–136 traverse the membrane as a helical segment; the sequence is IACLAGIVFILSGLCSMTGCS. Over 137–160 the chain is Extracellular; it reads LYANKITTEFFDPLFVEQKYELGA. A helical membrane pass occupies residues 161 to 181; sequence ALFIGWAGASLCIIGGVIFCF. Residues 182–228 lie on the Cytoplasmic side of the membrane; that stretch reads SISDNNKTPRYAYNGATSVMSSRTKYHGGEDFKTTNPSKQFDKNAYV.

Belongs to the claudin family. As to quaternary structure, can form homodimers both in trans (interaction between CLDN10 molecules in opposing membranes) and in cis (interaction between CLDN10 molecules within one membrane). Interacts with CLDN19.

The protein localises to the cell junction. The protein resides in the tight junction. Its subcellular location is the cell membrane. The catalysed reaction is Na(+)(in) = Na(+)(out). It carries out the reaction Li(+)(in) = Li(+)(out). It catalyses the reaction K(+)(in) = K(+)(out). The enzyme catalyses Rb(+)(in) = Rb(+)(out). The catalysed reaction is Cs(+)(in) = Cs(+)(out). It carries out the reaction NH4(+)(in) = NH4(+)(out). It catalyses the reaction methylamine(out) = methylamine(in). The enzyme catalyses Mg(2+)(in) = Mg(2+)(out). The catalysed reaction is Ca(2+)(in) = Ca(2+)(out). It carries out the reaction Sr(2+)(in) = Sr(2+)(out). It catalyses the reaction chloride(in) = chloride(out). The enzyme catalyses nitrate(in) = nitrate(out). Forms paracellular channels: polymerizes in tight junction strands with cation- and anion-selective channels through the strands, conveying epithelial permeability in a process known as paracellular tight junction permeability. In sweat glands and in the thick ascending limb (TAL) of Henle's loop in kidney, it controls paracellular sodium permeability which is essential for proper sweat production and renal function. In renal proximal tubules, it conveys selective chloride over hydrogencarbonate anion permeability which is required for renal chloride reabsorption and salt homeostasis. This Pongo abelii (Sumatran orangutan) protein is Claudin-10 (CLDN10).